A 108-amino-acid chain; its full sequence is MMKPVMLSVYGAENVCASCVNMPTAKDTYEWLEAALKRKYPNQPFEMQYIDIHEPPDNEHAKELAEKIRNDEYFYPLVLVEDKIVGEGNPKLKDVYEEMEKHGYTENR.

Cysteines 16 and 19 form a disulfide.

The protein is Putative disulfide oxidoreductase YuzD (yuzD) of Bacillus subtilis (strain 168).